A 141-amino-acid chain; its full sequence is EGSGGSGSSGHFTTGSNVHMSSVTNTSNGGTGGTGTGTGTGTGTGTGTGTGTGTGTGTGTGTGTGTGTASGTATGTASGTATGTANGTGTGKGTDTHTAGSGSGSGTGTGTGTGTTTTTTTGNNSSSSTPPVTLTESLLNK.

Residues 1–141 form a disordered region; it reads EGSGGSGSSG…VTLTESLLNK (141 aa). Residues 11–23 are compositionally biased toward polar residues; it reads HFTTGSNVHMSSV. Positions 29–68 are enriched in gly residues; it reads GGTGGTGTGTGTGTGTGTGTGTGTGTGTGTGTGTGTGTGT. 19 tandem repeats follow at residues 30–31, 33–34, 35–36, 37–38, 39–40, 41–42, 43–44, 45–46, 47–48, 49–50, 51–52, 53–54, 55–56, 57–58, 59–60, 61–62, 63–64, 65–66, and 67–68. A 32 X 2 AA approximate tandem repeats of G-T region spans residues 30-94; sequence GTGGTGTGTG…ANGTGTGKGT (65 aa). The stretch at 69–70 is one 20; approximate repeat; that stretch reads AS. Residues 69–85 are compositionally biased toward low complexity; sequence ASGTATGTASGTATGTA. Repeat unit 21 spans residues 71–72; the sequence is GT. Residues 73 to 74 form a 22; approximate repeat; it reads AT. The stretch at 75 to 76 is repeat 23; sequence GT. The 24; approximate repeat unit spans residues 77–78; that stretch reads AS. Repeat unit 25 spans residues 79-80; it reads GT. One copy of the 26; approximate repeat lies at 81 to 82; that stretch reads AT. Repeat 27 spans residues 83-84; the sequence is GT. Residues 85-86 form a 28; approximate repeat; it reads AN. Tandem repeats lie at residues 87-88 and 89-90. One copy of the 31; approximate repeat lies at 91-92; that stretch reads GK. The stretch at 93–94 is repeat 32; the sequence is GT. The span at 101–113 shows a compositional bias: gly residues; the sequence is SGSGSGTGTGTGT. The segment covering 114 to 129 has biased composition (low complexity); that stretch reads GTTTTTTTGNNSSSST. The segment covering 130–141 has biased composition (polar residues); that stretch reads PPVTLTESLLNK.

In terms of assembly, forms a heterodimer with timeless (TIM); the complex then translocates into the nucleus. Phosphorylated with a circadian rhythmicity, probably by the double-time protein (dbt). Phosphorylation could be implicated in the stability of per monomer and in the formation of heterodimer per-tim.

The protein localises to the nucleus. Its subcellular location is the cytoplasm. It localises to the perinuclear region. In terms of biological role, essential for biological clock functions. Determines the period length of circadian and ultradian rhythms; an increase in PER dosage leads to shortened circadian rhythms and a decrease leads to lengthened circadian rhythms. Essential for the circadian rhythmicity of locomotor activity, eclosion behavior, and for the rhythmic component of the male courtship song that originates in the thoracic nervous system. The biological cycle depends on the rhythmic formation and nuclear localization of the TIM-PER complex. Light induces the degradation of TIM, which promotes elimination of PER. Nuclear activity of the heterodimer coordinatively regulates PER and TIM transcription through a negative feedback loop. Behaves as a negative element in circadian transcriptional loop. Does not appear to bind DNA, suggesting indirect transcriptional inhibition. This is Period circadian protein (per) from Drosophila serrata (Fruit fly).